Reading from the N-terminus, the 629-residue chain is tRNA uridine 5-carboxymethylaminomethyl modification enzyme MnmG (629 aa).

FAD-binding positions include 13–18 (GGGHAG), V125, and S180. 273 to 287 (GPRYCPSIEDKIHRF) contacts NAD(+). Q370 is a binding site for FAD.

It belongs to the MnmG family. As to quaternary structure, homodimer. Heterotetramer of two MnmE and two MnmG subunits. The cofactor is FAD.

The protein localises to the cytoplasm. Its function is as follows. NAD-binding protein involved in the addition of a carboxymethylaminomethyl (cmnm) group at the wobble position (U34) of certain tRNAs, forming tRNA-cmnm(5)s(2)U34. The protein is tRNA uridine 5-carboxymethylaminomethyl modification enzyme MnmG of Shewanella sp. (strain MR-7).